Reading from the N-terminus, the 375-residue chain is Anhydro-N-acetylmuramic acid kinase 1 (375 aa).

Residue 20 to 27 (GTSFDGVD) participates in ATP binding. Residues 351–375 (APSTTGVAAPVGGGRRSKPGARELS) are disordered.

The protein belongs to the anhydro-N-acetylmuramic acid kinase family.

The enzyme catalyses 1,6-anhydro-N-acetyl-beta-muramate + ATP + H2O = N-acetyl-D-muramate 6-phosphate + ADP + H(+). It functions in the pathway amino-sugar metabolism; 1,6-anhydro-N-acetylmuramate degradation. It participates in cell wall biogenesis; peptidoglycan recycling. Functionally, catalyzes the specific phosphorylation of 1,6-anhydro-N-acetylmuramic acid (anhMurNAc) with the simultaneous cleavage of the 1,6-anhydro ring, generating MurNAc-6-P. Is required for the utilization of anhMurNAc either imported from the medium or derived from its own cell wall murein, and thus plays a role in cell wall recycling. In Jannaschia sp. (strain CCS1), this protein is Anhydro-N-acetylmuramic acid kinase 1.